Here is a 392-residue protein sequence, read N- to C-terminus: Zinc transporter zipt-7.1 (392 aa).

N-linked (GlcNAc...) asparagine glycosylation occurs at asparagine 63. The next 2 membrane-spanning stretches (helical) occupy residues 82-102 (VFSL…LFFI) and 114-134 (ILLA…IIPH). The disordered stretch occupies residues 139–162 (HSHGAHDHDHAHSHDHAHNDHSHD). The segment covering 142-162 (GAHDHDHAHSHDHAHNDHSHD) has biased composition (basic and acidic residues). A helical transmembrane segment spans residues 170–190 (GIYVIAGILVFMMVEQLVRII). An N-linked (GlcNAc...) asparagine glycan is attached at asparagine 248. 3 consecutive transmembrane segments (helical) span residues 255 to 275 (IGAS…TVLL), 304 to 324 (VTAL…NPVL), and 331 to 351 (GAIM…SVIP). Residue asparagine 361 is glycosylated (N-linked (GlcNAc...) asparagine). Residues 371-391 (SLVHLIAICMGVGMMYIVSLV) traverse the membrane as a helical segment.

Belongs to the ZIP transporter (TC 2.A.5) family. KE4/Catsup subfamily.

It is found in the membrane. Its function is as follows. Zinc transporter which regulates intracellular zinc levels. Required for spermatogenesis in both hermaphrodites and males where it resides in an inactive form in immature sperm, spermatids, but is likely activated in response to reduced spe-4 and spe-6 function. Upon activation, mediates the release of zinc from internal stores in spermatids into the cytoplasm. The resulting increase in cytoplasmic zinc levels promotes spermatid activation and subsequent differentiation into mature motile sperm that are capable of fertilization. The protein is Zinc transporter zipt-7.1 of Caenorhabditis briggsae.